The following is a 147-amino-acid chain: Hemoglobin subunit epsilon (147 aa).

The Globin domain maps to 3-147 (HFTAEEKAAV…VAIALAHKYH (145 aa)). Residues S14 and S51 each carry the phosphoserine modification. The heme b site is built by H64 and H93.

It belongs to the globin family. Heterotetramer of two alpha chains and two epsilon chains in early embryonic hemoglobin Gower-2; two zeta chains and two epsilon chains in early embryonic hemoglobin Gower-1. Red blood cells.

The epsilon chain is a beta-type chain of early mammalian embryonic hemoglobin. This Symphalangus syndactylus (Siamang) protein is Hemoglobin subunit epsilon (HBE1).